Here is a 687-residue protein sequence, read N- to C-terminus: UvrABC system protein C (687 aa).

In terms of domain architecture, GIY-YIG spans 16 to 95 (TEPGVYKFRD…IKKFDPHFNV (80 aa)). The UVR domain occupies 208-243 (DSVVRRLTNEMISASEALDFEKAARKRDDLNAVRKI).

This sequence belongs to the UvrC family. Interacts with UvrB in an incision complex.

The protein localises to the cytoplasm. In terms of biological role, the UvrABC repair system catalyzes the recognition and processing of DNA lesions. UvrC both incises the 5' and 3' sides of the lesion. The N-terminal half is responsible for the 3' incision and the C-terminal half is responsible for the 5' incision. In Corynebacterium diphtheriae (strain ATCC 700971 / NCTC 13129 / Biotype gravis), this protein is UvrABC system protein C.